Here is a 306-residue protein sequence, read N- to C-terminus: D-alanine--D-alanine ligase (306 aa).

The ATP-grasp domain occupies 107-303 (KHLFKSAGLS…FEQLVVRILE (197 aa)). Position 134 to 189 (134 to 189 (IMQQFKKVMVKPSHEGSSIGMAQASTPQELEDALSNAFKFDSQVLVEQWISGREFT)) interacts with ATP. Mg(2+)-binding residues include D257, E270, and N272.

It belongs to the D-alanine--D-alanine ligase family. Mg(2+) serves as cofactor. The cofactor is Mn(2+).

It localises to the cytoplasm. The catalysed reaction is 2 D-alanine + ATP = D-alanyl-D-alanine + ADP + phosphate + H(+). The protein operates within cell wall biogenesis; peptidoglycan biosynthesis. Functionally, cell wall formation. This chain is D-alanine--D-alanine ligase, found in Pseudoalteromonas translucida (strain TAC 125).